The following is a 502-amino-acid chain: MIDISQKEVWFVVGSQELYGEETLRKVAEHSQIIAKGLDASSSIPVKVVYKDVVKSPSQILDVCLAANSAKNCIGIIAWMHTFSPAKMWIGGLNILKKPLCHLHTQYNAEIPWGSIDMDFMNLNQSAHGDREFGFIMSRLRKKRKVVVGHWEDQRVQKQLGIWSRVVLGWDELQNLKVARIGDNMREVAVTEGDKVEAQIRFGMSVNGYDSSDVTKHIEKVTDKQLADLLAVYESSYNLTDSLKEGGAQRSSLVEAAKIELGLRAFLEEGGFGAFTDTFENLGVWKQLPGIATQRLMADGYGFGGEGDWKTAAMVRALKVMCIGLEGGTSFMEDYTYNFTPQKSYVLGSHMLEICPSIADGKPSCEVHPLGIGGKEDPARLVFNSPAGDAINVSLVDMGTRFRLIVNEVEAVKPMAELPKLPVARVLWDCKPNLEVAATAWILAGGAHHTVYSQSITTEYMEDFADIAGIELLVIDEKTTVREFKDKINANEAYFHLFQHGL.

Mn(2+) is bound by residues Glu-306, Glu-333, His-350, and His-449.

It belongs to the arabinose isomerase family. Requires Mn(2+) as cofactor.

It catalyses the reaction beta-L-arabinopyranose = L-ribulose. It participates in carbohydrate degradation; L-arabinose degradation via L-ribulose; D-xylulose 5-phosphate from L-arabinose (bacterial route): step 1/3. Its function is as follows. Catalyzes the conversion of L-arabinose to L-ribulose. The polypeptide is L-arabinose isomerase (Flavobacterium johnsoniae (strain ATCC 17061 / DSM 2064 / JCM 8514 / BCRC 14874 / CCUG 350202 / NBRC 14942 / NCIMB 11054 / UW101) (Cytophaga johnsonae)).